A 420-amino-acid chain; its full sequence is Glutamate dehydrogenase (420 aa).

Lys105 is a catalytic residue. NAD(+) is bound at residue 220–226; the sequence is GYGNAGY.

This sequence belongs to the Glu/Leu/Phe/Val dehydrogenases family. As to quaternary structure, homohexamer.

It is found in the cytoplasm. The enzyme catalyses L-glutamate + NAD(+) + H2O = 2-oxoglutarate + NH4(+) + NADH + H(+). It catalyses the reaction L-glutamate + NADP(+) + H2O = 2-oxoglutarate + NH4(+) + NADPH + H(+). This is Glutamate dehydrogenase (gdhA) from Pyrococcus furiosus (strain ATCC 43587 / DSM 3638 / JCM 8422 / Vc1).